Consider the following 201-residue polypeptide: 3-isopropylmalate dehydratase small subunit (201 aa).

It belongs to the LeuD family. LeuD type 1 subfamily. As to quaternary structure, heterodimer of LeuC and LeuD.

It catalyses the reaction (2R,3S)-3-isopropylmalate = (2S)-2-isopropylmalate. It participates in amino-acid biosynthesis; L-leucine biosynthesis; L-leucine from 3-methyl-2-oxobutanoate: step 2/4. In terms of biological role, catalyzes the isomerization between 2-isopropylmalate and 3-isopropylmalate, via the formation of 2-isopropylmaleate. The sequence is that of 3-isopropylmalate dehydratase small subunit from Shewanella baltica (strain OS223).